The chain runs to 163 residues: NADH-quinone oxidoreductase subunit I (163 aa).

4Fe-4S ferredoxin-type domains lie at 53–83 (LRRYPNGEERCIACKLCEAVCPALAITIEAG) and 94–123 (TLYEIDMFKCIYCGFCEESCPVDSIVETRE). [4Fe-4S] cluster is bound by residues Cys63, Cys66, Cys69, Cys73, Cys103, Cys106, Cys109, and Cys113.

It belongs to the complex I 23 kDa subunit family. As to quaternary structure, NDH-1 is composed of 14 different subunits. Subunits NuoA, H, J, K, L, M, N constitute the membrane sector of the complex. Requires [4Fe-4S] cluster as cofactor.

It localises to the cell inner membrane. It carries out the reaction a quinone + NADH + 5 H(+)(in) = a quinol + NAD(+) + 4 H(+)(out). In terms of biological role, NDH-1 shuttles electrons from NADH, via FMN and iron-sulfur (Fe-S) centers, to quinones in the respiratory chain. The immediate electron acceptor for the enzyme in this species is believed to be ubiquinone. Couples the redox reaction to proton translocation (for every two electrons transferred, four hydrogen ions are translocated across the cytoplasmic membrane), and thus conserves the redox energy in a proton gradient. In Alkalilimnicola ehrlichii (strain ATCC BAA-1101 / DSM 17681 / MLHE-1), this protein is NADH-quinone oxidoreductase subunit I.